The following is a 74-amino-acid chain: Protein krueppel (74 aa).

C2H2-type zinc fingers lie at residues 1–4, 10–32, 38–60, and 66–74; these read ERTH, FECP…MRLH, YHCS…LRVH, and YACELCAAK.

Belongs to the krueppel C2H2-type zinc-finger protein family.

The protein resides in the nucleus. Functionally, krueppel is a gap class segmentation protein. The polypeptide is Protein krueppel (Kr) (Apis mellifera (Honeybee)).